We begin with the raw amino-acid sequence, 65 residues long: UPF0337 protein gbs1203 (65 aa).

Residues Met1–Lys12 show a composition bias toward basic and acidic residues. The segment at Met1–Glu29 is disordered.

Belongs to the UPF0337 (CsbD) family.

This is UPF0337 protein gbs1203 from Streptococcus agalactiae serotype III (strain NEM316).